Here is a 255-residue protein sequence, read N- to C-terminus: MKIGVFDSGVGGFSVLKSLLKAQLFDEIIYYGDSARVPYGTKDPTTIKQFGLEALDFFKPHKIELLIVACNTASALALEEMQKHSKIPIVGVIGPSILAIKQQVKDKNAPILVLGTKATIQSNAYDNALKQQGYLNVSHLATSLFVPLIEENILEGELLETCMRYYFTPLEILPEVVILGCTHFPLIAHQIEGYFMEHFALSTPPLLIHSGDAIVEYLQQKYALKKNACAFPKVEFHASGDVVWLEKQAKEWLKL.

Substrate contacts are provided by residues D7–S8 and Y39–G40. C70 serves as the catalytic Proton donor/acceptor. Residue N71 to T72 coordinates substrate. The Proton donor/acceptor role is filled by C181. T182–H183 is a substrate binding site.

The protein belongs to the aspartate/glutamate racemases family.

It carries out the reaction L-glutamate = D-glutamate. The protein operates within cell wall biogenesis; peptidoglycan biosynthesis. Provides the (R)-glutamate required for cell wall biosynthesis. This chain is Glutamate racemase, found in Helicobacter pylori (strain Shi470).